Here is a 140-residue protein sequence, read N- to C-terminus: Large ribosomal subunit protein uL16c (140 aa).

Belongs to the universal ribosomal protein uL16 family. As to quaternary structure, part of the 50S ribosomal subunit.

It localises to the plastid. It is found in the chloroplast. This is Large ribosomal subunit protein uL16c from Cyanidium caldarium (Red alga).